Consider the following 37-residue polypeptide: Large ribosomal subunit protein bL36A (37 aa).

This sequence belongs to the bacterial ribosomal protein bL36 family.

The sequence is that of Large ribosomal subunit protein bL36A from Actinobacillus pleuropneumoniae serotype 5b (strain L20).